We begin with the raw amino-acid sequence, 31 residues long: GVIPCGESCVFIPCISAVIGCSCKSKVCYRN.

The cyclopeptide (Gly-Asn) cross-link spans Gly1 to Asn31. Intrachain disulfides connect Cys5–Cys21, Cys9–Cys23, and Cys14–Cys28.

Belongs to the cyclotide family. Bracelet subfamily. Post-translationally, this is a cyclic peptide.

Its function is as follows. Probably participates in a plant defense mechanism. This Viola pubescens (Downy yellow violet) protein is Cyclotide vpub-A.